Here is a 499-residue protein sequence, read N- to C-terminus: MKKKYILAIDQGTTSSRAILFDHKGRITGMAQREFTQIFPQPGWVEHNPRDIMTSVYTTITELLNNTQIDVRAIAGIGITNQRETTVIWNRQTGQPIYNAIVWQSRQTKNICDQLTTAGYQDLVHAKTGLLMDAYFSGTKVKWILDHAENAHTQAARGELAFGTIDTWIIWNLTGGQVHVTDYSNASRTLMYDIHALRWDPDLLTMLDIPAAILPDVRSSSEIYGLTQTPYFHGEQIPIAGIAGDQQAALFGQACFEPGMAKNTYGTGCFMLMHTGKKAVESKNGLLTTIAWGLNGEIEYALEGSIFIAGSVVQWLRDGLRMFGKASDSQAYADRVSDNGGVYVVPAFVGLGAPYWRSDVRGAVFGLTRSTTKEHFVRAALESMAYQTRDVLSAMQADADIELKELRTDGAAITNDFMAQFQSDILAVPVLRSQIAETTALGAAYLAGLATGFWSSREEMTQHWAINRCFKPQMDKEQREHLYAGWKQAVAATLGFRVA.

Thr-13 is an ADP binding site. ATP-binding residues include Thr-13, Thr-14, and Ser-15. Thr-13 is a sn-glycerol 3-phosphate binding site. Arg-17 lines the ADP pocket. Residues Arg-83, Glu-84, Tyr-135, and Asp-245 each coordinate sn-glycerol 3-phosphate. Glycerol is bound by residues Arg-83, Glu-84, Tyr-135, Asp-245, and Gln-246. Positions 267 and 310 each coordinate ADP. Positions 267, 310, 314, and 411 each coordinate ATP. Residues Ala-411 and Asn-415 each contribute to the ADP site.

This sequence belongs to the FGGY kinase family.

The enzyme catalyses glycerol + ATP = sn-glycerol 3-phosphate + ADP + H(+). The protein operates within polyol metabolism; glycerol degradation via glycerol kinase pathway; sn-glycerol 3-phosphate from glycerol: step 1/1. Inhibited by fructose 1,6-bisphosphate (FBP). Functionally, key enzyme in the regulation of glycerol uptake and metabolism. Catalyzes the phosphorylation of glycerol to yield sn-glycerol 3-phosphate. The protein is Glycerol kinase of Xylella fastidiosa (strain M12).